A 146-amino-acid polypeptide reads, in one-letter code: Hemoglobin subunit beta-1 (146 aa).

A Globin domain is found at K2–C146. 2 residues coordinate heme b: H63 and H92.

Belongs to the globin family. As to quaternary structure, hb1 is a heterotetramer of two alpha-1 chains and two beta-1 chains; Hb2 is a heterotetramer of two alpha-2 chains and two beta-1 chains. As to expression, red blood cells.

Involved in oxygen transport from gills to the various peripheral tissues. The sequence is that of Hemoglobin subunit beta-1 (hbb1) from Anarhichas minor (Arctic spotted wolffish).